The sequence spans 536 residues: Methyl-accepting chemotaxis aspartate transducer (536 aa).

At 1–10 (MFNRIRISTS) the chain is on the cytoplasmic side. Residues 11-31 (LFLLLISFCIMQLISTGLSYV) traverse the membrane as a helical segment. At 32–188 (ALRADNHNLE…ASSQQAYGWS (157 aa)) the chain is on the periplasmic side. Residues 64 to 73 (RNTLNRAGTR) are the 3 Arg may form a positively charged pocket, which binds the alpha-carboxyl group of the attractant AA. The chain crosses the membrane as a helical span at residues 189-209 (IWLVAGAVLMLLVVTLSAMWW). Residues 210–536 (LRTMLVQPLN…VKETLDCQTA (327 aa)) lie on the Cytoplasmic side of the membrane. In terms of domain architecture, HAMP spans 212–264 (TMLVQPLNIIRGHFERIASGDLSAPIEVYGRNEISQLFASLQRMQQSLIGTVG). Residues 269-498 (GAESILIGLQ…ESASAAAALE (230 aa)) form the Methyl-accepting transducer domain. Position 293 is a glutamate methyl ester (Gln) (Gln-293). Glu-300 is subject to Glutamate methyl ester (Glu). Gln-307 is modified (glutamate methyl ester (Gln)). Glutamate methyl ester (Glu) occurs at positions 489 and 498.

The protein belongs to the methyl-accepting chemotaxis (MCP) protein family.

The protein localises to the cell inner membrane. This protein responds to changes in Asp concentration in the environment, transduces a signal from the outside to the inside of the cell, and facilitates sensory adaptation through various levels of methylation. Its function is as follows. Chemotactic-signal transducers respond to changes in the concentration of attractants and repellents in the environment, transduce a signal from the outside to the inside of the cell, and facilitate sensory adaptation through the variation of the level of methylation. Attractants increase the level of methylation while repellents decrease the level of methylation, the methyl groups are added by the methyltransferase CheR and removed by the methylesterase CheB. The protein is Methyl-accepting chemotaxis aspartate transducer (tas) of Klebsiella aerogenes (strain ATCC 13048 / DSM 30053 / CCUG 1429 / JCM 1235 / KCTC 2190 / NBRC 13534 / NCIMB 10102 / NCTC 10006 / CDC 819-56) (Enterobacter aerogenes).